The following is a 330-amino-acid chain: L-tryptophan isonitrile synthase AmbI2 (330 aa).

This sequence belongs to the isocyanide synthase family.

The enzyme catalyses D-ribulose 5-phosphate + L-tryptophan = (2S)-3-(1H-indol-3-yl)-2-isocyanopropanoate + hydroxyacetone + formaldehyde + phosphate + H2O + H(+). Functionally, involved in the biosynthesis of ambiguines, a family of hapalindole-type alkaloids. Responsible for the synthesis of the isonitrile group on tryptophan using ribulose 5-phosphate as the source of the carbon atom. The protein is L-tryptophan isonitrile synthase AmbI2 of Fischerella ambigua (strain UTEX 1903).